The following is a 394-amino-acid chain: Chaperone protein DnaJ (394 aa).

Residues 4–68 enclose the J domain; sequence DYYEILGVSR…ELRARYDRFG (65 aa). The CR-type zinc-finger motif lies at 136–218; the sequence is GGEKQIRISH…CNGEGLAQTT (83 aa). Residues Cys149, Cys152, Cys166, Cys169, Cys192, Cys195, Cys206, and Cys209 each contribute to the Zn(2+) site. CXXCXGXG motif repeat units follow at residues 149-156, 166-173, 192-199, and 206-213; these read CPVCGGSG, CPTCGGAG, and CYNCNGEG.

This sequence belongs to the DnaJ family. Homodimer. It depends on Zn(2+) as a cofactor.

The protein resides in the cytoplasm. In terms of biological role, participates actively in the response to hyperosmotic and heat shock by preventing the aggregation of stress-denatured proteins and by disaggregating proteins, also in an autonomous, DnaK-independent fashion. Unfolded proteins bind initially to DnaJ; upon interaction with the DnaJ-bound protein, DnaK hydrolyzes its bound ATP, resulting in the formation of a stable complex. GrpE releases ADP from DnaK; ATP binding to DnaK triggers the release of the substrate protein, thus completing the reaction cycle. Several rounds of ATP-dependent interactions between DnaJ, DnaK and GrpE are required for fully efficient folding. Also involved, together with DnaK and GrpE, in the DNA replication of plasmids through activation of initiation proteins. This Synechococcus sp. (strain JA-3-3Ab) (Cyanobacteria bacterium Yellowstone A-Prime) protein is Chaperone protein DnaJ.